Consider the following 87-residue polypeptide: Conotoxin QcMNCL-XIII0.1 (87 aa).

The N-terminal stretch at 1–18 (MNCLQLLLVLLLISTIAA) is a signal peptide. A propeptide spanning residues 19-34 (LHGDGRVPQRRGRNIR) is cleaved from the precursor.

Post-translationally, contains 4 disulfide bonds. Expressed by the venom duct.

The protein localises to the secreted. May interact and inhibit Cav3.1/CACNA1G calcium channels. In a ex vivo model, shows ability to block nerve signal transduction. This chain is Conotoxin QcMNCL-XIII0.1, found in Conus quercinus (Oak cone).